A 399-amino-acid polypeptide reads, in one-letter code: ATP-dependent RNA helicase FAL1 (399 aa).

The short motif at 23 to 51 (ATFESMDLKEGLLRGIYSYGFEAPSAIQS) is the Q motif element. The region spanning 54–227 (ITQIISGKDV…KKFMNDPVKI (174 aa)) is the Helicase ATP-binding domain. 67–74 (AQSGTGKT) lines the ATP pocket. The DEAD box motif lies at 173-176 (DEAD). The 162-residue stretch at 238 to 399 (GIKQYYVNVE…PMPADLSELS (162 aa)) folds into the Helicase C-terminal domain.

The protein belongs to the DEAD box helicase family. DDX48/FAL1 subfamily.

The protein localises to the nucleus. It is found in the nucleolus. It catalyses the reaction ATP + H2O = ADP + phosphate + H(+). In terms of biological role, ATP-dependent RNA helicase involved in 40S ribosomal subunit biogenesis. Required for the processing and cleavage of 35S pre-rRNA at sites A0, A1, and A2, leading to mature 18S rRNA. The protein is ATP-dependent RNA helicase FAL1 (FAL1) of Candida glabrata (strain ATCC 2001 / BCRC 20586 / JCM 3761 / NBRC 0622 / NRRL Y-65 / CBS 138) (Yeast).